The following is a 228-amino-acid chain: Auxin-responsive protein IAA14 (228 aa).

The short motif at 8–12 is the EAR-like (transcriptional repression) element; that stretch reads LCLGL. The 101-residue stretch at 110–210 folds into the PB1 domain; the sequence is VAFVKVSMDG…SCKRLRIMKG (101 aa).

The protein belongs to the Aux/IAA family. In terms of assembly, homodimers and heterodimers. Interacts with TPL. Preferentially expressed in roots and flowers.

It localises to the nucleus. In terms of biological role, aux/IAA proteins are short-lived transcriptional factors that function as repressors of early auxin response genes at low auxin concentrations. Repression is thought to result from the interaction with auxin response factors (ARFs), proteins that bind to the auxin-responsive promoter element (AuxRE). Formation of heterodimers with ARF proteins may alter their ability to modulate early auxin response genes expression. The chain is Auxin-responsive protein IAA14 (IAA14) from Arabidopsis thaliana (Mouse-ear cress).